The chain runs to 59 residues: Protein ORF5a (59 aa).

Residues Val-13 to Ile-33 traverse the membrane as a helical; Signal-anchor for type III membrane protein segment.

The protein localises to the membrane. The protein is Protein ORF5a (GP5) of Equine arteritis virus (strain Bucyrus) (EAV).